Reading from the N-terminus, the 286-residue chain is Urease accessory protein UreD (286 aa).

The protein belongs to the UreD family. As to quaternary structure, ureD, UreF and UreG form a complex that acts as a GTP-hydrolysis-dependent molecular chaperone, activating the urease apoprotein by helping to assemble the nickel containing metallocenter of UreC. The UreE protein probably delivers the nickel.

It is found in the cytoplasm. In terms of biological role, required for maturation of urease via the functional incorporation of the urease nickel metallocenter. This is Urease accessory protein UreD from Rhodopseudomonas palustris (strain BisA53).